The sequence spans 95 residues: MVEVVKKQIECKIKINSVNGIVSLDCETKVIFNVKDSEMPYAVSSIKEIGFVETIKTDQVKNMINRIVEELDKRIDEIKEGLNELEKSGLTIEVD.

Residues 60–89 are a coiled coil; that stretch reads VKNMINRIVEELDKRIDEIKEGLNELEKSG.

This is an uncharacterized protein from Sulfolobus islandicus filamentous virus (isolate Iceland/Hveragerdi) (SIFV).